The sequence spans 389 residues: MARYSLGLGLCLLVASVSAIPVDNNVEGEPEVECGPTSITVNFNTRNAFEGHVYVKGLFDQQECRNDEGGRQVAGIELPFDTCNVARTRSLNPKGVFVTTTVVVSFHPQFVTKVDRAYRVQCFYMEADKTVSTQIEVSDLTTAFQTQVVPMPICKYEILNGGPTGEPVQFATIGQQVYHKWTCDSETVDTFCAVVHSCTVDDGNGDTVQILDENGCALDKFLLNNLEYPTDLMAGQEAHVYKYADRSQLFYQCQISITVKEPNEECARPTCSEPQGFGAVKQANQTAQFFRVLKKRSAPVMENILDVRAELTTLEVLEGNLPSSLTQAQALVASREIGEDSFRQELCISSFHISVVTVFLGLTVFVAIFITYMIVSRMMVPSDKMQSAC.

The first 19 residues, 1–19 (MARYSLGLGLCLLVASVSA), serve as a signal peptide directing secretion. Residues 20 to 354 (IPVDNNVEGE…ELCISSFHIS (335 aa)) lie on the Extracellular side of the membrane. The ZP domain maps to 33–278 (ECGPTSITVN…PTCSEPQGFG (246 aa)). Asn284 carries an N-linked (GlcNAc...) asparagine glycan. A helical membrane pass occupies residues 355-375 (VVTVFLGLTVFVAIFITYMIV). At 376–389 (SRMMVPSDKMQSAC) the chain is on the cytoplasmic side.

It localises to the cell membrane. Plays a role in alae formation in L1 larvae. The protein is Cuticlin-3 of Caenorhabditis elegans.